We begin with the raw amino-acid sequence, 332 residues long: Beta-hexosaminidase (332 aa).

Residues Asp62, Arg70, Arg131, and 161–162 (KH) each bind substrate. Residue His174 is the Proton donor/acceptor of the active site. Catalysis depends on Asp244, which acts as the Nucleophile.

This sequence belongs to the glycosyl hydrolase 3 family. NagZ subfamily.

It is found in the cytoplasm. The catalysed reaction is Hydrolysis of terminal non-reducing N-acetyl-D-hexosamine residues in N-acetyl-beta-D-hexosaminides.. It functions in the pathway cell wall biogenesis; peptidoglycan recycling. Plays a role in peptidoglycan recycling by cleaving the terminal beta-1,4-linked N-acetylglucosamine (GlcNAc) from peptide-linked peptidoglycan fragments, giving rise to free GlcNAc, anhydro-N-acetylmuramic acid and anhydro-N-acetylmuramic acid-linked peptides. The protein is Beta-hexosaminidase of Pseudomonas aeruginosa (strain LESB58).